Reading from the N-terminus, the 256-residue chain is DNA repair protein RecO (256 aa).

This sequence belongs to the RecO family.

Functionally, involved in DNA repair and RecF pathway recombination. The polypeptide is DNA repair protein RecO (Streptococcus pneumoniae serotype 19F (strain G54)).